We begin with the raw amino-acid sequence, 431 residues long: Transcription factor Sp7 (431 aa).

The segment at 30–56 is disordered; the sequence is SSPLRDSTTLGKAGTKKPYSVGSDLSA. Residues lysine 41 and lysine 45 each carry the N6-propionyllysine modification. Lysine 58 participates in a covalent cross-link: Glycyl lysine isopeptide (Lys-Gly) (interchain with G-Cter in ubiquitin). Disordered stretches follow at residues 71-115 and 154-260; these read TNGL…VPKG and TPTP…SGGY. The short motif at 156–164 is the 9aaTAD element; sequence TPWWDMHPG. Over residues 166 to 178 the composition is skewed to gly residues; sequence NWLGGGQGQGDGL. Lysine 230 is covalently cross-linked (Glycyl lysine isopeptide (Lys-Gly) (interchain with G-Cter in ubiquitin)). C2H2-type zinc fingers lie at residues 294–318, 324–348, and 354–376; these read HSCH…LRWH, FVCN…VRTH, and FTCL…QRTH. An N6-propionyllysine mark is found at lysine 361 and lysine 371. The segment at 367–431 is disordered; the sequence is DHLSKHQRTH…SPEQSNLLEI (65 aa). Over residues 403–412 the composition is skewed to polar residues; the sequence is SQTPRPSASP.

This sequence belongs to the Sp1 C2H2-type zinc-finger protein family. As to quaternary structure, interacts with RIOX1; the interaction is direct and inhibits transcription activator activity. In terms of processing, ubiquitination at leads to proteasomal degradation. SP7 is a short-live protein with an endogenous half-life of approximately 12 hours. Propionylated. Depropionylation at Lys-371 by SIRT7 activates transcription factor activity and positively regulates bone formation by osteoblasts. As to expression, restricted to bone-derived cell.

It is found in the nucleus. In terms of biological role, transcriptional activator essential for osteoblast differentiation. Binds to SP1 and EKLF consensus sequences and to other G/C-rich sequences. This chain is Transcription factor Sp7 (SP7), found in Homo sapiens (Human).